The sequence spans 307 residues: MSLCQGSAMQKLIAKTEGPMAGVGRVGGFNRPSGGLGQSSAEQQLQARAGERASQNRFMAVLEPQRELGGRMARGDGLQADWVRQFSSMQVEDPLAFSAEYQRAYAGYEQRQAARPAARVLGYGGSMFMPTMPQQQLQQQVAPQQTAQAALQEAELERYLEREFDVLEGELAPPEVPEALSAPLLDHEQLGFQESAKAIYATLSAPIHKDKFGASKFMGLMRQVSTGDVTLSKSESGYTGLHMTAGGEAVGAEYRAVTDEVVQVPEVAAALPLAGEERSLASQMEDLLNKVDIAGLSSNEAAMRILS.

A Glycyl cysteine thioester (Cys-Gly) (interchain with G-Cter in ubiquitin) cross-link involves residue cysteine 4. The segment at 23 to 52 is disordered; it reads VGRVGGFNRPSGGLGQSSAEQQLQARAGER.

Belongs to the peroxin-21 family. As to quaternary structure, interacts with PEX7. Post-translationally, monoubiquitinated at Cys-4; acts as a signal for PEX21 extraction and is required for proper export from peroxisomes and recycling.

It is found in the cytoplasm. The protein resides in the cytosol. It localises to the peroxisome. In terms of biological role, mediates peroxisomal import of proteins containing a C-terminal PTS2-type peroxisomal targeting signal via its interaction with PEX7. Interaction with PEX7 only takes place when PEX7 is associated with cargo proteins containing a PTS2 peroxisomal targeting signal. PEX7 along with PTS2-containing cargo proteins are then translocated through the PEX13-PEX14 docking complex together with PEX21. This chain is Peroxisomal protein PEX21 (PEX21), found in Eremothecium gossypii (strain ATCC 10895 / CBS 109.51 / FGSC 9923 / NRRL Y-1056) (Yeast).